The chain runs to 478 residues: tRNA modification GTPase MnmE (478 aa).

(6S)-5-formyl-5,6,7,8-tetrahydrofolate-binding residues include Arg25, Glu82, and Lys135. The TrmE-type G domain occupies 231–400; sequence GIKVVIAGQP…LREQLLRVVG (170 aa). K(+) is bound at residue Asn241. Residues 241–246, 260–266, and 285–288 each bind GTP; these read NVGKSS, TPVAGTT, and DTAG. Ser245 is a binding site for Mg(2+). K(+)-binding residues include Thr260, Val262, and Thr265. Thr266 contributes to the Mg(2+) binding site. Residue Lys478 participates in (6S)-5-formyl-5,6,7,8-tetrahydrofolate binding.

This sequence belongs to the TRAFAC class TrmE-Era-EngA-EngB-Septin-like GTPase superfamily. TrmE GTPase family. As to quaternary structure, homodimer. Heterotetramer of two MnmE and two MnmG subunits. K(+) serves as cofactor.

Its subcellular location is the cytoplasm. Its function is as follows. Exhibits a very high intrinsic GTPase hydrolysis rate. Involved in the addition of a carboxymethylaminomethyl (cmnm) group at the wobble position (U34) of certain tRNAs, forming tRNA-cmnm(5)s(2)U34. This Polaromonas naphthalenivorans (strain CJ2) protein is tRNA modification GTPase MnmE.